Reading from the N-terminus, the 400-residue chain is Tryptophan synthase beta chain (400 aa).

K95 bears the N6-(pyridoxal phosphate)lysine mark.

This sequence belongs to the TrpB family. As to quaternary structure, tetramer of two alpha and two beta chains. Pyridoxal 5'-phosphate is required as a cofactor.

The catalysed reaction is (1S,2R)-1-C-(indol-3-yl)glycerol 3-phosphate + L-serine = D-glyceraldehyde 3-phosphate + L-tryptophan + H2O. Its pathway is amino-acid biosynthesis; L-tryptophan biosynthesis; L-tryptophan from chorismate: step 5/5. The beta subunit is responsible for the synthesis of L-tryptophan from indole and L-serine. In Chlorobaculum tepidum (strain ATCC 49652 / DSM 12025 / NBRC 103806 / TLS) (Chlorobium tepidum), this protein is Tryptophan synthase beta chain.